The primary structure comprises 531 residues: Putative F-box protein At2g02890 (531 aa).

The F-box domain occupies 141–188 (RHSSSLTNDLIEEILSRLHSKSVARFRCVSKQCASMFASPYFKKLFQT).

The sequence is that of Putative F-box protein At2g02890 from Arabidopsis thaliana (Mouse-ear cress).